The sequence spans 191 residues: MTQQITLIKDKILSDNYFTLHNITYDLTRKDGEVIRHKREVYDRGNGATILLYNAKKKTVVLIRQFRVATWVNGNESGQLIETCAGLLDNDEPEVCIRKEAIEETGYEVGEVRKLFELYMSPGGVTELIHFFIAEYSDNQRANAGGGVEDEDIEVLELPFSQALEMIKTGEIRDGKTVLLLNYLQTSHLMD.

GDP-alpha-D-mannose-binding positions include Tyr17, 38-40 (KRE), Arg67, and 85-87 (AGL). The Nudix hydrolase domain occupies 43-180 (DRGNGATILL…EIRDGKTVLL (138 aa)). Residues Ala85, Glu100, and Glu104 each coordinate Mg(2+). The short motif at 86 to 106 (GLLDNDEPEVCIRKEAIEETG) is the Nudix box element. GDP-alpha-D-mannose is bound by residues Glu104, Glu127, 150–151 (DE), and Lys176. Glu151 lines the Mg(2+) pocket.

Belongs to the Nudix hydrolase family. NudK subfamily. As to quaternary structure, homodimer. Mg(2+) is required as a cofactor.

It catalyses the reaction GDP-alpha-D-mannose + H2O = alpha-D-mannose 1-phosphate + GMP + 2 H(+). Functionally, nucleoside diphosphate sugar hydrolase that hydrolyzes GDP-mannose as its preferred substrate, yielding GMP and mannose-1-phosphate. The chain is GDP-mannose pyrophosphatase (nudK) from Shigella boydii serotype 4 (strain Sb227).